Consider the following 155-residue polypeptide: Ribosome maturation factor RimP (155 aa).

It belongs to the RimP family.

It is found in the cytoplasm. Functionally, required for maturation of 30S ribosomal subunits. The sequence is that of Ribosome maturation factor RimP from Prochlorococcus marinus (strain MIT 9312).